A 444-amino-acid polypeptide reads, in one-letter code: Probable D-serine dehydratase (444 aa).

N6-(pyridoxal phosphate)lysine is present on Lys-118.

The protein belongs to the serine/threonine dehydratase family. DsdA subfamily. It depends on pyridoxal 5'-phosphate as a cofactor.

It carries out the reaction D-serine = pyruvate + NH4(+). This is Probable D-serine dehydratase from Acinetobacter baumannii (strain AB0057).